Consider the following 242-residue polypeptide: Venom nerve growth factor 3 (242 aa).

Residues 1–18 (MSMLCYTLIIAFLIGIWA) form the signal peptide. The propeptide occupies 19-125 (APKSEDNVPL…ALNRNIRSKR (107 aa)). A compositionally biased stretch (basic and acidic residues) spans 48–66 (LKTSRNTDQRHPAPKKAED). The disordered stretch occupies residues 48-69 (LKTSRNTDQRHPAPKKAEDQEL). 3 disulfide bridges follow: Cys139-Cys203, Cys181-Cys231, and Cys191-Cys233. Asn147 carries an N-linked (GlcNAc...) asparagine glycan.

Belongs to the NGF-beta family. In terms of assembly, homodimer; non-covalently linked. As to expression, expressed by the venom gland.

The protein localises to the secreted. Nerve growth factor is important for the development and maintenance of the sympathetic and sensory nervous systems. It stimulates division and differentiation of sympathetic and embryonic sensory neurons as well as basal forebrain cholinergic neurons in the brain. Its relevance in the snake venom is not clear. However, it has been shown to inhibit metalloproteinase-dependent proteolysis of platelet glycoprotein Ib alpha, suggesting a metalloproteinase inhibition to prevent metalloprotease autodigestion and/or protection against prey proteases. Binds a lipid between the two protein chains in the homodimer. The lipid-bound form promotes histamine relase from mouse mast cells, contrary to the lipid-free form. This chain is Venom nerve growth factor 3, found in Demansia vestigiata (Lesser black whip snake).